The chain runs to 96 residues: Small ribosomal subunit protein bS6 (96 aa).

It belongs to the bacterial ribosomal protein bS6 family.

Its function is as follows. Binds together with bS18 to 16S ribosomal RNA. The protein is Small ribosomal subunit protein bS6 of Streptococcus uberis (strain ATCC BAA-854 / 0140J).